The chain runs to 1091 residues: ATP-dependent helicase/deoxyribonuclease subunit B (1091 aa).

It belongs to the helicase family. AddB/RexB type 2 subfamily. In terms of assembly, heterodimer of AddA and RexB. Requires Mg(2+) as cofactor.

The heterodimer acts as both an ATP-dependent DNA helicase and an ATP-dependent, dual-direction single-stranded exonuclease. Recognizes the chi site generating a DNA molecule suitable for the initiation of homologous recombination. This subunit has 5' -&gt; 3' nuclease activity but not helicase activity. This Streptococcus pneumoniae (strain Hungary19A-6) protein is ATP-dependent helicase/deoxyribonuclease subunit B.